We begin with the raw amino-acid sequence, 625 residues long: Adenine deaminase 2 (625 aa).

Belongs to the metallo-dependent hydrolases superfamily. Adenine deaminase family. Requires Mn(2+) as cofactor.

It catalyses the reaction adenine + H2O + H(+) = hypoxanthine + NH4(+). The sequence is that of Adenine deaminase 2 from Bradyrhizobium diazoefficiens (strain JCM 10833 / BCRC 13528 / IAM 13628 / NBRC 14792 / USDA 110).